We begin with the raw amino-acid sequence, 114 residues long: uncharacterized protein (114 aa).

Residue glycine 2 is the site of N-myristoyl glycine; by host attachment. Transmembrane regions (helical) follow at residues 11 to 31 (FGLI…KDLL) and 44 to 64 (GLMW…LVAI). Residues 73–114 (VNKDSKDPKDKSIEFDDSPIRDGSSGTPDNSNEPTDLSVETS) form a disordered region. Residues 75 to 92 (KDSKDPKDKSIEFDDSPI) show a composition bias toward basic and acidic residues. Residues 96–114 (SSGTPDNSNEPTDLSVETS) show a composition bias toward polar residues.

The protein localises to the membrane. This is an uncharacterized protein from Acanthamoeba polyphaga (Amoeba).